The chain runs to 652 residues: Nitrate reductase-like protein NarX (652 aa).

The segment at 1 to 251 (MTVTPRTGSR…FGDQTDVPES (251 aa)) is nitrate reductase alpha subunit. Residues 53–117 (DKVVRSTHGV…AFSWYTYSPT (65 aa)) form the 4Fe-4S Mo/W bis-MGD-type domain. 4 residues coordinate [4Fe-4S] cluster: H60, C64, C68, and C103. A Mo-bis(molybdopterin guanine dinucleotide)-binding site is contributed by D233. The nitrate reductase delta subunit stretch occupies residues 258 to 415 (VWQCASVLLT…TVAAVCRTGD (158 aa)). 5 helical membrane-spanning segments follow: residues 416-436 (MMGE…VAVG), 466-486 (PMFH…LVIP), 504-524 (AVVL…LLIY), 545-565 (LVLV…SGVV), and 595-615 (APLY…LWPF). The tract at residues 416–652 (MMGELFWTVV…VLTRPRRRGW (237 aa)) is nitrate reductase gamma subunit. Residues H469 and H479 each contribute to the heme b site. Heme b contacts are provided by H602 and H620.

It in the N-terminal section; belongs to the nitrate reductase alpha subunit family. In the central section; belongs to the NarJ/NarW family. The protein in the C-terminal section; belongs to the nitrate reductase gamma subunit family. Requires [4Fe-4S] cluster as cofactor. The cofactor is Mo-bis(molybdopterin guanine dinucleotide). Heme b is required as a cofactor.

The protein localises to the cell membrane. In terms of biological role, does not seem to have nitrate reductase activity. This is Nitrate reductase-like protein NarX (narX) from Mycobacterium tuberculosis (strain CDC 1551 / Oshkosh).